Consider the following 236-residue polypeptide: Large ribosomal subunit protein uL1 (236 aa).

It belongs to the universal ribosomal protein uL1 family. In terms of assembly, part of the 50S ribosomal subunit.

In terms of biological role, binds directly to 23S rRNA. The L1 stalk is quite mobile in the ribosome, and is involved in E site tRNA release. Its function is as follows. Protein L1 is also a translational repressor protein, it controls the translation of the L11 operon by binding to its mRNA. The polypeptide is Large ribosomal subunit protein uL1 (Corynebacterium jeikeium (strain K411)).